We begin with the raw amino-acid sequence, 459 residues long: MYKEDTIAAISTPHGAGGVGIIRISGDKAFEIAERIFRGKKDFKLIRSHTINYGKIVNPENGAVLDEVLLSKMEKPKTFTREDVVEINCHGGMVVLKNILELCIKEGARLAEPGEFTKRAFLNGRIDLSQAEAVIDLINSKTNESSKAAISQLEGKLSRKIKDARSKLIELLAHIEVTVDYPEHDIEEITGNMVYEEIGKIKEKLCDIVKSFERGRIIREGIDAVIIGKPNVGKSSLLNELSGKSKAIVTDIPGTTRDIIEEYININGIPLRIIDTAGIRETEDVVEKIGVEKTHRAIDEADLVIMMIDAKRGMDEDDNRILTMLGDKKLIILINKIDLVDEKQINEIESLLKGRKCIRTSVKEGTGISELENAITELFVQGEVSVNEEILLTNIRHKNLIDMAISSIEKAMESIDGSMPLDLVSIDITDAADYLGQITGESVSEDVMHEIFSKFCLGK.

(6S)-5-formyl-5,6,7,8-tetrahydrofolate is bound by residues R23, E86, and R125. A TrmE-type G domain is found at 221–380 (GIDAVIIGKP…LENAITELFV (160 aa)). N231 provides a ligand contact to K(+). GTP contacts are provided by residues 231–236 (NVGKSS), 250–256 (TDIPGTT), and 275–278 (DTAG). Position 235 (S235) interacts with Mg(2+). The K(+) site is built by T250, I252, and T255. T256 is a binding site for Mg(2+). (6S)-5-formyl-5,6,7,8-tetrahydrofolate is bound at residue K459.

The protein belongs to the TRAFAC class TrmE-Era-EngA-EngB-Septin-like GTPase superfamily. TrmE GTPase family. As to quaternary structure, homodimer. Heterotetramer of two MnmE and two MnmG subunits. Requires K(+) as cofactor.

The protein resides in the cytoplasm. Functionally, exhibits a very high intrinsic GTPase hydrolysis rate. Involved in the addition of a carboxymethylaminomethyl (cmnm) group at the wobble position (U34) of certain tRNAs, forming tRNA-cmnm(5)s(2)U34. This Acetivibrio thermocellus (strain ATCC 27405 / DSM 1237 / JCM 9322 / NBRC 103400 / NCIMB 10682 / NRRL B-4536 / VPI 7372) (Clostridium thermocellum) protein is tRNA modification GTPase MnmE.